Here is a 182-residue protein sequence, read N- to C-terminus: NADH-quinone oxidoreductase subunit B (182 aa).

Residues Cys61, Cys62, Cys126, and Cys156 each coordinate [4Fe-4S] cluster.

Belongs to the complex I 20 kDa subunit family. NDH-1 is composed of 14 different subunits. Subunits NuoB, C, D, E, F, and G constitute the peripheral sector of the complex. It depends on [4Fe-4S] cluster as a cofactor.

The protein localises to the cell inner membrane. It carries out the reaction a quinone + NADH + 5 H(+)(in) = a quinol + NAD(+) + 4 H(+)(out). Functionally, NDH-1 shuttles electrons from NADH, via FMN and iron-sulfur (Fe-S) centers, to quinones in the respiratory chain. The immediate electron acceptor for the enzyme in this species is believed to be ubiquinone. Couples the redox reaction to proton translocation (for every two electrons transferred, four hydrogen ions are translocated across the cytoplasmic membrane), and thus conserves the redox energy in a proton gradient. This chain is NADH-quinone oxidoreductase subunit B, found in Xanthomonas oryzae pv. oryzae (strain PXO99A).